Reading from the N-terminus, the 459-residue chain is Cysteine--tRNA ligase (459 aa).

Cys-27 provides a ligand contact to Zn(2+). Positions 29-39 (PTVYNFVHIGN) match the 'HIGH' region motif. Cys-211, His-236, and Glu-240 together coordinate Zn(2+). The 'KMSKS' region signature appears at 269 to 273 (KMSKS). An ATP-binding site is contributed by Lys-272.

It belongs to the class-I aminoacyl-tRNA synthetase family. As to quaternary structure, monomer. Zn(2+) is required as a cofactor.

It is found in the cytoplasm. It carries out the reaction tRNA(Cys) + L-cysteine + ATP = L-cysteinyl-tRNA(Cys) + AMP + diphosphate. The chain is Cysteine--tRNA ligase from Ehrlichia canis (strain Jake).